The following is a 194-amino-acid chain: Phosphoheptose isomerase (194 aa).

Residues 37–194 enclose the SIS domain; the sequence is ISNSFKQGGK…LIEFEMAKQA (158 aa). Residue 52-54 coordinates substrate; sequence NGG. Zn(2+) is bound by residues His-61 and Glu-65. Residues Glu-65, 93-94, 119-121, Ser-124, and Gln-172 each bind substrate; these read ND and STS. Positions 172 and 180 each coordinate Zn(2+).

Belongs to the SIS family. GmhA subfamily. Homotetramer. Zn(2+) is required as a cofactor.

It localises to the cytoplasm. The enzyme catalyses 2 D-sedoheptulose 7-phosphate = D-glycero-alpha-D-manno-heptose 7-phosphate + D-glycero-beta-D-manno-heptose 7-phosphate. It participates in carbohydrate biosynthesis; D-glycero-D-manno-heptose 7-phosphate biosynthesis; D-glycero-alpha-D-manno-heptose 7-phosphate and D-glycero-beta-D-manno-heptose 7-phosphate from sedoheptulose 7-phosphate: step 1/1. Its function is as follows. Catalyzes the isomerization of sedoheptulose 7-phosphate in D-glycero-D-manno-heptose 7-phosphate. In Haemophilus influenzae (strain 86-028NP), this protein is Phosphoheptose isomerase.